A 137-amino-acid chain; its full sequence is Bet1-like protein At4g14600 (137 aa).

The Cytoplasmic portion of the chain corresponds to 1-113; the sequence is MASNPHRSGA…MSIIRSGNNH (113 aa). Residues 43–105 form the t-SNARE coiled-coil homology domain; the sequence is DPMHSDLDDE…KNNIRKLNMS (63 aa). The helical; Anchor for type IV membrane protein transmembrane segment at 114–134 threads the bilayer; sequence IMHVVLFALLVFFVLYIWSKM. Topologically, residues 135–137 are vesicular; sequence FKR.

This sequence belongs to the BET1 family.

It localises to the golgi apparatus membrane. Its subcellular location is the endoplasmic reticulum membrane. Required for vesicular transport from the ER to the Golgi complex. Functions as a SNARE associated with ER-derived vesicles. This is Bet1-like protein At4g14600 from Arabidopsis thaliana (Mouse-ear cress).